A 4034-amino-acid polypeptide reads, in one-letter code: Polyketide synthase-nonribosomal peptide synthetase ACE1 (4034 aa).

One can recognise a Ketosynthase family 3 (KS3) domain in the interval 10–448; it reads TEPIAIIGSG…GANAHVILES (439 aa). Residues Cys183, His322, and His368 each act as for beta-ketoacyl synthase activity in the active site. The segment at 560–879 is acyl transferase; sequence VFTGQGAQWA…PYFGCLSRGT (320 aa). Positions 951-1082 are N-terminal hotdog fold; sequence NELLGTRLPD…GDLVVLLGEP (132 aa). In terms of domain architecture, PKS/mFAS DH spans 951–1257; that stretch reads NELLGTRLPD…TKPLSPPSAA (307 aa). The interval 952–1252 is dehydratase (DH) domain; sequence ELLGTRLPDD…LQGLHTKPLS (301 aa). His983 serves as the catalytic Proton acceptor; for dehydratase activity. The C-terminal hotdog fold stretch occupies residues 1097–1257; sequence MKDIDEERFY…TKPLSPPSAA (161 aa). Asp1157 (proton donor; for dehydratase activity) is an active-site residue. The interval 1396 to 1594 is methyltransferase (MT) domain; it reads NMLNRFYSDA…SGADIVTPHH (199 aa). The ketoreductase (KR)domain stretch occupies residues 2144-2317; that stretch reads TYWLVGLTGG…AGSSVEIGCI (174 aa). The 82-residue stretch at 2424-2505 folds into the Carrier 1 domain; that stretch reads KSSEEVLDIL…LLLEFVQGLI (82 aa). At Ser2465 the chain carries O-(pantetheine 4'-phosphoryl)serine. The tract at residues 2512 to 2598 is disordered; it reads KLDGSDGADA…SPTTSASMAS (87 aa). The span at 2556-2577 shows a compositional bias: low complexity; that stretch reads PSGPASPTSPSSATASPGRSRS. Polar residues predominate over residues 2586 to 2598; that stretch reads TPVSPTTSASMAS. Residues 2608–3037 are condensation; sequence TVPVSFGQSR…ATSLNRPAIY (430 aa). Positions 3073 to 3473 are adenylation; it reads KYATKFALRN…GGLIIEGRID (401 aa). Positions 3598–3678 constitute a Carrier 2 domain; sequence AELGSDQARM…AMTDLVLSDD (81 aa). Ser3638 bears the O-(pantetheine 4'-phosphoryl)serine mark. The reductase-like stretch occupies residues 3719-3944; the sequence is LTGATGFLGR…DFVSVENVAA (226 aa).

It belongs to the NRP synthetase family.

The protein localises to the cytoplasm. It participates in secondary metabolite biosynthesis. Functionally, hybrid PKS-NRPS synthetase; part of the gene cluster that mediates the biosynthesis of a tyrosine-derived cytochalasan acting as a fungal signal recognized by resistant rice plants and leads to avirulence in Pi33 resistant rice cultivars. The first step in the pathway is catalyzed by the hybrid PKS-NRPS ACE1, assisted by the enoyl reductase RAP1, that are responsible for fusion of the tyrosine precursor and the polyketide backbone. The polyketide synthase module (PKS) of ACE1 is responsible for the synthesis of the polyketide backbone and the downstream nonribosomal peptide synthetase (NRPS) amidates the carboxyl end of the polyketide with the tyrosine precursor. Because ACE1 lacks a designated enoylreductase (ER) domain, the required activity is provided the enoyl reductase RAP1. Reduction by the hydrolyase ORFZ, followed by dehydration and intra-molecular Diels-Alder cyclization by the Diels-Alderase ORF3 then yield the required isoindolone-fused macrocycle. A number of oxidative steps catalyzed by the tailoring enzymes identified within the cluster, including cytochrome P450 monooxygenases CYP1 to CYP4, the FAD-linked oxidoreductase OXR2 and the short-chain dehydrogenase/reductase OXR1, are further required to afford the final cytochalasans that confer avirulence and which have still to be identified. The monooxygenase CYP1 has been shown to be a site-selective C-18 hydroxylase whereas the function of CYP3 is the site-selective epoxidation of the C-6/C-7 olefin that is present in some intermediate compounds. Finally, SYN2 and RAP2 are not required for avirulence in Pi33 resistant rice cultivars. The protein is Polyketide synthase-nonribosomal peptide synthetase ACE1 of Pyricularia oryzae (strain 70-15 / ATCC MYA-4617 / FGSC 8958) (Rice blast fungus).